The sequence spans 123 residues: Ribosome-binding factor A (123 aa).

The protein belongs to the RbfA family. As to quaternary structure, monomer. Binds 30S ribosomal subunits, but not 50S ribosomal subunits or 70S ribosomes.

It localises to the cytoplasm. Functionally, one of several proteins that assist in the late maturation steps of the functional core of the 30S ribosomal subunit. Associates with free 30S ribosomal subunits (but not with 30S subunits that are part of 70S ribosomes or polysomes). Required for efficient processing of 16S rRNA. May interact with the 5'-terminal helix region of 16S rRNA. This chain is Ribosome-binding factor A, found in Neisseria meningitidis serogroup C (strain 053442).